The following is a 128-amino-acid chain: Phosphoribosyl-AMP cyclohydrolase (128 aa).

Asp94 is a Mg(2+) binding site. Cys95 is a Zn(2+) binding site. Asp96 and Asp98 together coordinate Mg(2+). Zn(2+) contacts are provided by Cys111 and Cys118.

The protein belongs to the PRA-CH family. Homodimer. Requires Mg(2+) as cofactor. It depends on Zn(2+) as a cofactor.

It localises to the cytoplasm. It carries out the reaction 1-(5-phospho-beta-D-ribosyl)-5'-AMP + H2O = 1-(5-phospho-beta-D-ribosyl)-5-[(5-phospho-beta-D-ribosylamino)methylideneamino]imidazole-4-carboxamide. It functions in the pathway amino-acid biosynthesis; L-histidine biosynthesis; L-histidine from 5-phospho-alpha-D-ribose 1-diphosphate: step 3/9. Functionally, catalyzes the hydrolysis of the adenine ring of phosphoribosyl-AMP. The polypeptide is Phosphoribosyl-AMP cyclohydrolase (Streptomyces coelicolor (strain ATCC BAA-471 / A3(2) / M145)).